The sequence spans 602 residues: Elongation factor 4 (602 aa).

The 183-residue stretch at 2-184 folds into the tr-type G domain; the sequence is DHIRNFSIIA…AVIARMPPPK (183 aa). GTP contacts are provided by residues 14–19 and 131–134; these read DHGKST and NKMD.

It belongs to the TRAFAC class translation factor GTPase superfamily. Classic translation factor GTPase family. LepA subfamily.

The protein resides in the cell inner membrane. It carries out the reaction GTP + H2O = GDP + phosphate + H(+). Required for accurate and efficient protein synthesis under certain stress conditions. May act as a fidelity factor of the translation reaction, by catalyzing a one-codon backward translocation of tRNAs on improperly translocated ribosomes. Back-translocation proceeds from a post-translocation (POST) complex to a pre-translocation (PRE) complex, thus giving elongation factor G a second chance to translocate the tRNAs correctly. Binds to ribosomes in a GTP-dependent manner. The protein is Elongation factor 4 of Leptothrix cholodnii (strain ATCC 51168 / LMG 8142 / SP-6) (Leptothrix discophora (strain SP-6)).